The sequence spans 170 residues: Protein ripply3 (170 aa).

Residues 40–43 (WRPW) carry the WRPW motif motif. Basic and acidic residues predominate over residues 51–61 (ELDGQQRRSGE). Residues 51–78 (ELDGQQRRSGEADGVPTNTGPKGALGFQ) form a disordered region. The ripply homology domain stretch occupies residues 79–114 (HPVRLYMPKSKTSEYLQHMGRKVLASFPVQATIHFY). The segment covering 142–155 (GVDSSRGSSDNYSV) has biased composition (polar residues). The interval 142 to 170 (GVDSSRGSSDNYSVQGGPKRNIGSHAGSA) is disordered.

Belongs to the ripply family. In terms of assembly, interacts with tbx1 and tle4/grg4. As to expression, at neurula stage, expressed in the region close to the heart mesoderm. At the tailbud stage, expressed in the pharyngeal region.

The protein resides in the nucleus. Acts as a transcriptional corepressor. Negative regulator of the transcriptional activity of tbx1 that plays a key role in pharyngeal development. Plays a role in the formation of the anteroposterior (AP) axis during embryonic development; required to establish the posterolateral border of the pre-placodal ectoderm (PPE) acting downstream of the retinoic acid receptor (RAR) signaling. The protein is Protein ripply3 (ripply3) of Xenopus laevis (African clawed frog).